Here is a 232-residue protein sequence, read N- to C-terminus: Orotidine 5'-phosphate decarboxylase (232 aa).

Substrate is bound by residues aspartate 13, lysine 35, aspartate 62–threonine 71, threonine 122, arginine 182, glutamine 191, glycine 211, and arginine 212. Catalysis depends on lysine 64, which acts as the Proton donor.

The protein belongs to the OMP decarboxylase family. Type 1 subfamily. Homodimer.

It catalyses the reaction orotidine 5'-phosphate + H(+) = UMP + CO2. The protein operates within pyrimidine metabolism; UMP biosynthesis via de novo pathway; UMP from orotate: step 2/2. Functionally, catalyzes the decarboxylation of orotidine 5'-monophosphate (OMP) to uridine 5'-monophosphate (UMP). The chain is Orotidine 5'-phosphate decarboxylase from Pseudomonas syringae pv. syringae (strain B728a).